The chain runs to 207 residues: ATP-dependent Clp protease proteolytic subunit (207 aa).

Ser-111 functions as the Nucleophile in the catalytic mechanism. His-136 is a catalytic residue.

The protein belongs to the peptidase S14 family. Fourteen ClpP subunits assemble into 2 heptameric rings which stack back to back to give a disk-like structure with a central cavity, resembling the structure of eukaryotic proteasomes.

Its subcellular location is the cytoplasm. It catalyses the reaction Hydrolysis of proteins to small peptides in the presence of ATP and magnesium. alpha-casein is the usual test substrate. In the absence of ATP, only oligopeptides shorter than five residues are hydrolyzed (such as succinyl-Leu-Tyr-|-NHMec, and Leu-Tyr-Leu-|-Tyr-Trp, in which cleavage of the -Tyr-|-Leu- and -Tyr-|-Trp bonds also occurs).. Its function is as follows. Cleaves peptides in various proteins in a process that requires ATP hydrolysis. Has a chymotrypsin-like activity. Plays a major role in the degradation of misfolded proteins. The protein is ATP-dependent Clp protease proteolytic subunit of Aliivibrio salmonicida (strain LFI1238) (Vibrio salmonicida (strain LFI1238)).